The sequence spans 1342 residues: DNA-directed RNA polymerase subunit beta (1342 aa).

The protein belongs to the RNA polymerase beta chain family. In terms of assembly, the RNAP catalytic core consists of 2 alpha, 1 beta, 1 beta' and 1 omega subunit. When a sigma factor is associated with the core the holoenzyme is formed, which can initiate transcription.

The enzyme catalyses RNA(n) + a ribonucleoside 5'-triphosphate = RNA(n+1) + diphosphate. In terms of biological role, DNA-dependent RNA polymerase catalyzes the transcription of DNA into RNA using the four ribonucleoside triphosphates as substrates. In Actinobacillus pleuropneumoniae serotype 5b (strain L20), this protein is DNA-directed RNA polymerase subunit beta.